A 147-amino-acid polypeptide reads, in one-letter code: Small ribosomal subunit protein uS5 (147 aa).

The S5 DRBM domain occupies 9-72 (FEEVIVDIGR…DDAFKNIVEV (64 aa)).

The protein belongs to the universal ribosomal protein uS5 family. Part of the 30S ribosomal subunit. Contacts proteins S4 and S8.

With S4 and S12 plays an important role in translational accuracy. Functionally, located at the back of the 30S subunit body where it stabilizes the conformation of the head with respect to the body. This chain is Small ribosomal subunit protein uS5, found in Campylobacter jejuni subsp. jejuni serotype O:6 (strain 81116 / NCTC 11828).